A 692-amino-acid chain; its full sequence is Elongation factor G (692 aa).

The 275-residue stretch at 8–282 folds into the tr-type G domain; it reads ENTRNIGIMA…AVIDYLPSPL (275 aa). Residues 17 to 24, 81 to 85, and 135 to 138 contribute to the GTP site; these read AHIDAGKT, DTPGH, and NKMD.

This sequence belongs to the TRAFAC class translation factor GTPase superfamily. Classic translation factor GTPase family. EF-G/EF-2 subfamily.

It localises to the cytoplasm. Catalyzes the GTP-dependent ribosomal translocation step during translation elongation. During this step, the ribosome changes from the pre-translocational (PRE) to the post-translocational (POST) state as the newly formed A-site-bound peptidyl-tRNA and P-site-bound deacylated tRNA move to the P and E sites, respectively. Catalyzes the coordinated movement of the two tRNA molecules, the mRNA and conformational changes in the ribosome. The protein is Elongation factor G of Bacillus cereus (strain Q1).